Here is a 306-residue protein sequence, read N- to C-terminus: Ribonuclease H2 subunit B (306 aa).

The tract at residues 232–285 is disordered; it reads LPDLSSPTPEPPVKKRKVSEAPVEAEEDYTKFNSDSKNKKSNSKMTAAQKSLAK. Over residues 259-269 the composition is skewed to basic and acidic residues; it reads DYTKFNSDSKN.

This sequence belongs to the RNase H2 subunit B family. As to quaternary structure, the RNase H2 complex is a heterotrimer composed of the catalytic subunit rnaseh2a and the non-catalytic subunits rnaseh2b and rnaseh2c.

It localises to the nucleus. In terms of biological role, non catalytic subunit of RNase H2, an endonuclease that specifically degrades the RNA of RNA:DNA hybrids. Participates in DNA replication, possibly by mediating the removal of lagging-strand Okazaki fragment RNA primers during DNA replication. Mediates the excision of single ribonucleotides from DNA:RNA duplexes. This chain is Ribonuclease H2 subunit B (rnaseh2b), found in Xenopus tropicalis (Western clawed frog).